The sequence spans 160 residues: Cyclic pyranopterin monophosphate synthase (160 aa).

Substrate-binding positions include 76 to 78 (MCH) and 113 to 114 (ME). Aspartate 128 is an active-site residue.

This sequence belongs to the MoaC family. Homohexamer; trimer of dimers.

The enzyme catalyses (8S)-3',8-cyclo-7,8-dihydroguanosine 5'-triphosphate = cyclic pyranopterin phosphate + diphosphate. It functions in the pathway cofactor biosynthesis; molybdopterin biosynthesis. Its function is as follows. Catalyzes the conversion of (8S)-3',8-cyclo-7,8-dihydroguanosine 5'-triphosphate to cyclic pyranopterin monophosphate (cPMP). The chain is Cyclic pyranopterin monophosphate synthase from Brevibacillus brevis (strain 47 / JCM 6285 / NBRC 100599).